The primary structure comprises 365 residues: Cobalt-precorrin-5B C(1)-methyltransferase (365 aa).

It belongs to the CbiD family.

The enzyme catalyses Co-precorrin-5B + S-adenosyl-L-methionine = Co-precorrin-6A + S-adenosyl-L-homocysteine. Its pathway is cofactor biosynthesis; adenosylcobalamin biosynthesis; cob(II)yrinate a,c-diamide from sirohydrochlorin (anaerobic route): step 6/10. Functionally, catalyzes the methylation of C-1 in cobalt-precorrin-5B to form cobalt-precorrin-6A. The sequence is that of Cobalt-precorrin-5B C(1)-methyltransferase from Pseudomonas fluorescens (strain ATCC BAA-477 / NRRL B-23932 / Pf-5).